A 218-amino-acid polypeptide reads, in one-letter code: Uracil-DNA glycosylase (218 aa).

Residue Asp68 is the Proton acceptor of the active site.

The protein belongs to the uracil-DNA glycosylase (UDG) superfamily. UNG family. Homodimer. Interacts with protein OPG148. Component of the Uracil-DNA glycosylase(UDG)-OPG148-polymerase complex; OPG148 and UDG form a heterodimeric processivity factor that associates with OPG71 to form the processive polymerase holoenzyme.

The enzyme catalyses Hydrolyzes single-stranded DNA or mismatched double-stranded DNA and polynucleotides, releasing free uracil.. Its function is as follows. Plays an essential role in viral replication as a component of the DNA polymerase processivity factor. Excises uracil residues from the DNA which can arise as a result of misincorporation of dUMP residues by DNA polymerase or due to deamination of cytosine. The polypeptide is Uracil-DNA glycosylase (OPG116) (Vaccinia virus (strain Ankara) (VACV)).